Reading from the N-terminus, the 213-residue chain is 3-isopropylmalate dehydratase small subunit (213 aa).

Belongs to the LeuD family. LeuD type 1 subfamily. As to quaternary structure, heterodimer of LeuC and LeuD.

The enzyme catalyses (2R,3S)-3-isopropylmalate = (2S)-2-isopropylmalate. It participates in amino-acid biosynthesis; L-leucine biosynthesis; L-leucine from 3-methyl-2-oxobutanoate: step 2/4. Functionally, catalyzes the isomerization between 2-isopropylmalate and 3-isopropylmalate, via the formation of 2-isopropylmaleate. This chain is 3-isopropylmalate dehydratase small subunit, found in Pseudomonas savastanoi pv. phaseolicola (strain 1448A / Race 6) (Pseudomonas syringae pv. phaseolicola (strain 1448A / Race 6)).